A 687-amino-acid polypeptide reads, in one-letter code: C-mannosyltransferase dpy-19 (687 aa).

11 helical membrane-spanning segments follow: residues 24–44 (GISGNLWLATVVLIGLFVGFL), 170–190 (ITGVFVVAGTVATSLFYLGVL), 191–211 (VSDSIFGGILSVLCFAFNHGE), 223–243 (ESFAFPFIIGHIAILTYIIKY), 253–273 (LLISAAVPALLFWQFTQFAFF), 276–296 (ICSIFAAFSMDLVPLDTAKTI), 303–323 (AFFISFVMLFGNEMMIAALYF), 324–344 (PSIWALATVIYISPMLAGIRL), 347–367 (LYLLILALIFGSITLGLKVGF), 415–435 (LSSTLLIPLALLSIGAFSWDF), and 454–474 (GEVIYNLVQLICSTTMAVLIM).

Belongs to the dpy-19 family.

Its subcellular location is the endoplasmic reticulum membrane. Its function is as follows. C-mannosyltransferase that mediates C-mannosylation of tryptophan residues on target proteins such as unc-5 and mig-21. Mediates the attachment of alpha-mannose in C-C linkage to the C2 of the indole ring of tryptophan. C-mannosylation takes place in the endoplasmic reticulum and frequently found in thrombospondin (TSP) type-1 repeats and in the WSXWS motif of type I cytokine receptors. Required to orient neuroblasts QL and QR correctly on the anterior/posterior (A/P) axis: QL and QR are born in the same A/P position, but polarize and migrate left/right asymmetrically, QL migrates toward the posterior and QR migrates toward the anterior. Required with unc-40 to express mab-5 correctly in the Q cell descendants. The sequence is that of C-mannosyltransferase dpy-19 from Caenorhabditis briggsae.